A 2442-amino-acid chain; its full sequence is CREB-binding protein (2442 aa).

Disordered stretches follow at residues 1–41 and 74–179; these read MAEN…NDLP and LRGG…CMNA. The residue at position 2 (Ala-2) is an N-acetylalanine. Residues 20–30 are compositionally biased toward polar residues; sequence PGFSANDSTDF. The segment covering 80–90 has biased composition (low complexity); the sequence is SSINPGIGNVS. Ser-121 bears the Phosphoserine mark. Residues 122–131 show a composition bias toward polar residues; the sequence is PLSQGDSSAP. Ser-124 bears the Phosphoserine; by ATM mark. Residues 136–150 are compositionally biased toward low complexity; it reads QAASTSGPTPAASQA. The span at 151 to 172 shows a compositional bias: polar residues; it reads LNPQAQKQVGLATSSPATSQTG. Omega-N-methylarginine is present on Arg-220. The tract at residues 227-410 is interaction with SRCAP; sequence PTPAMQGASS…GKACQVAHCA (184 aa). The tract at residues 266–290 is disordered; that stretch reads KMGITGNTSPFGQPFSQAGGQPMGA. Residues 270–284 are compositionally biased toward polar residues; it reads TGNTSPFGQPFSQAG. The TAZ-type 1 zinc-finger motif lies at 347 to 433; it reads DPEKRKLIQQ…RHDCPVCLPL (87 aa). Zn(2+) is bound by residues His-363, Cys-367, Cys-380, Cys-385, His-394, Cys-398, Cys-404, Cys-409, His-418, Cys-422, Cys-427, and Cys-430. The KIX domain maps to 587–666; it reads GVRKGWHEHV…KIYKIQKELE (80 aa). Asymmetric dimethylarginine occurs at positions 601 and 625. Lys-657 bears the N6-acetyllysine mark. 2 stretches are compositionally biased toward polar residues: residues 794–805 and 814–823; these read LPQNQFPSSSGA and PAQTGVSQGQ. A disordered region spans residues 794 to 1083; sequence LPQNQFPSSS…STSPSQPRKK (290 aa). Composition is skewed to pro residues over residues 844-860 and 876-885; these read PCPP…PPPA and GMTPPQPAAP. 2 stretches are compositionally biased toward low complexity: residues 886–929 and 937–952; these read TQPS…VTPQ and PSVA…PTPV. The span at 973–988 shows a compositional bias: polar residues; it reads PTPSSVASAETNSQQP. Lys-998 is covalently cross-linked (Glycyl lysine isopeptide (Lys-Gly) (interchain with G-Cter in SUMO1)). Residues 1011 to 1021 are compositionally biased toward basic and acidic residues; sequence GESKGEPRSEM. Lys-1014 carries the post-translational modification N6-acetyllysine. A Phosphoserine modification is found at Ser-1030. Positions 1032–1059 are enriched in basic and acidic residues; sequence VKEETDIAEQKSEPMEVDEKKPEVKVEV. Residues Lys-1033 and Lys-1056 each participate in a glycyl lysine isopeptide (Lys-Gly) (interchain with G-Cter in SUMO1) cross-link. The span at 1066–1078 shows a compositional bias: low complexity; that stretch reads SSNGTASQSTSPS. Ser-1076 carries the phosphoserine modification. The Bromo domain maps to 1085–1192; that stretch reads FKPEELRQAL…EVFEQEIDPV (108 aa). The tract at residues 1124–1170 is interaction with histone; that stretch reads DYFDIVKNPMDLSTIKRKLDTGQYQEPWQYVDDVWLMFNNAWLYNRK. Positions 1162–1180 are interaction with ASF1A; it reads NNAWLYNRKTSRVYKFCSK. Lys-1216 is modified (N6-acetyllysine). Residues 1323–1700 enclose the CBP/p300-type HAT domain; sequence KFSAKRLQTT…MLVELHTQGQ (378 aa). Ser-1382 and Ser-1386 each carry phosphoserine; by IKKA. Residues 1433-1435 form an interaction with histone region; that stretch reads YLD. Acetyl-CoA contacts are provided by residues 1434-1436, 1446-1447, Ile-1493, Arg-1498, and Trp-1502; these read LDS and RT. An interaction with TRERF1 region spans residues 1460–1891; it reads YVKKLGYVTG…LPSPTSAPPG (432 aa). The segment covering 1556-1568 has biased composition (basic and acidic residues); that stretch reads LEQEEEERKKEES. The interval 1556-1615 is disordered; that stretch reads LEQEEEERKKEESTAASETTEGSQGDSKNAKKKNNKKTNKNKSSISRANKKKPSMPNVSN. N6-acetyllysine occurs at positions 1583, 1591, 1592, 1595, and 1597. A compositionally biased stretch (basic residues) spans 1585–1595; the sequence is AKKKNNKKTNK. The segment at 1702–1750 adopts a ZZ-type zinc-finger fold; it reads RFVYTCNECKHHVETRWHCTVCEDYDLCINCYNTKSHAHKMVKWGLGLD. Zn(2+) contacts are provided by Cys-1707, Cys-1710, Cys-1720, Cys-1723, Cys-1729, Cys-1732, His-1738, and His-1740. An N6-acetyllysine mark is found at Lys-1741 and Lys-1744. Ser-1763 is modified (phosphoserine). Residues 1765 to 1846 form a TAZ-type 2 zinc finger; that stretch reads QESRRLSIQR…KCPVPFCLNI (82 aa). Disordered stretches follow at residues 1874–1959 and 1977–2028; these read TRNV…VEAA and INNS…PLPQ. The span at 1900 to 1912 shows a compositional bias: pro residues; sequence PQTPQPPAQPQPS. Residues 1925–1940 are compositionally biased toward polar residues; it reads ARTQPPTTVSTGKPTS. Over residues 1943-1954 the composition is skewed to pro residues; sequence PAPPPPAQPPPA. Over residues 2018–2027 the composition is skewed to low complexity; it reads PGQWQQAPLP. Phosphoserine occurs at positions 2063, 2076, and 2079. Low complexity-rich tracts occupy residues 2112 to 2137, 2146 to 2160, 2196 to 2219, 2228 to 2263, and 2294 to 2305; these read QPGM…HQQP, QAGV…QQQA, QLLQ…QGSA, HGQF…SMGQ, and RILQQQQMKQQI. 2 disordered regions span residues 2112 to 2263 and 2294 to 2433; these read QPGM…SMGQ and RILQ…TTGD. 2 stretches are compositionally biased toward polar residues: residues 2315-2327 and 2334-2343; these read SPQQ…QPQA and QIATSLSNQV. Residues 2349–2372 are compositionally biased toward pro residues; sequence VQSPRPQSQPPHSSPSPRIQPQPS. At Ser-2351 the chain carries Phosphoserine. Residues 2411 to 2424 are compositionally biased toward polar residues; sequence QLNTPSRSALSSEL.

Found in a complex containing NCOA2; NCOA3; IKKA; IKKB and IKBKG. Probably part of a complex with HIF1A and EP300. Interacts with GATA1; the interaction results in acetylation and enhancement of transcriptional activity of GATA1. Interacts with MAF and ZCCHC12. Interacts with DAXX; the interaction is dependent on CBP sumoylation and results in suppression of the transcriptional activity via recruitment of HDAC2 to DAXX. Interacts with phosphorylated CREB1. Interacts with CITED4 (C-terminal region). Interacts (via the TAZ-type 1 domain) with HIF1A. Interacts with SRCAP, CARM1, ELF3, MLLT7/FOXO4, N4BP2, NCOA1, NCOA3, NCOA6, PCAF, DDX5, DDX17, PELP1, PML, SMAD1, SMAD2, SMAD3, SPIB and TRERF1. Interacts with KLF1; the interaction results in acetylation of KLF1 and enhancement of its transcriptional activity. Interacts with MTDH. Interacts with NFATC4. Interacts with MAFG; the interaction acetylates MAFG in the basic region and stimulates NFE2 transcriptional activity through increasing its DNA-binding activity. Interacts with IRF2; the interaction acetylates IRF2 and regulates its activity on the H4 promoter. Interacts with IRF3 (when phosphorylated); forming the dsRNA-activated factor 1 (DRAF1), a complex which activates the transcription of the type I interferon genes. Interacts (via N-terminus) with SS18L1/CREST (via C-terminus). Interacts with MECOM. Interacts with CITED1 (via C-terminus). Interacts with FOXO1; the interaction acetylates FOXO1 and inhibits its transcriptional activity. Interacts with NPAS2, CLOCK and BMAL1. Interacts with ASF1A and ASF1B; this promotes histone acetylation. Interacts with acetylated TP53/p53 and with the acetylated histones H3 and H4. Interacts (via transactivation domain and C-terminus) with PCNA; the interaction occurs on chromatin in UV-irradiated damaged cells. Interacts with DHX9 (via N-terminus); this interaction mediates association with RNA polymerase II holoenzyme and stimulates CREB-dependent transcriptional activation. Interacts with SMAD4; negatively regulated by ZBTB7A. Interacts with DUX4 (via C-terminus). Forms a complex with KMT2A and CREB1. Interacts with DDX3X; this interaction may facilitate HNF4A acetylation. Interacts with MSX1; the interaction may inhibit MSX1 autoinactivation. Interacts with ACSS2. As to quaternary structure, (Microbial infection) Interacts with HTLV-1 Tax, p30II and HBZ. In terms of assembly, (Microbial infection) Interacts with human herpes virus 8/HHV-8 protein vIRF-1; this interaction inhibits CREBBP binding to IRF3. (Microbial infection) Interacts with HIV-1 Tat. Post-translationally, methylation of the KIX domain by CARM1 blocks association with CREB. This results in the blockade of CREB signaling, and in activation of apoptotic response. In terms of processing, phosphorylated by CHUK/IKKA at Ser-1382 and Ser-1386; these phosphorylations promote cell growth by switching the binding preference of CREBBP from TP53 to NF-kappa-B. Phosphorylated by _ at Ser-124 in response to DNA damage, promoting interaction with MRE11 and lactylation of MRE11. Sumoylation negatively regulates transcriptional activity via the recruitment of DAAX. Post-translationally, autoacetylation is required for binding to protein substrates, such as acetylated histones and acetylated TP53/p53. Autoacetylation is induced by glucose and fatty acids.

The protein localises to the cytoplasm. It is found in the nucleus. The enzyme catalyses L-lysyl-[histone] + acetyl-CoA = N(6)-acetyl-L-lysyl-[histone] + CoA + H(+). It catalyses the reaction L-lysyl-[protein] + acetyl-CoA = N(6)-acetyl-L-lysyl-[protein] + CoA + H(+). The catalysed reaction is (S)-lactoyl-CoA + L-lysyl-[protein] = N(6)-[(S)-lactoyl]-L-lysyl-[protein] + CoA + H(+). Functionally, acetylates histones, giving a specific tag for transcriptional activation. Mediates acetylation of histone H3 at 'Lys-18' and 'Lys-27' (H3K18ac and H3K27ac, respectively). Also acetylates non-histone proteins, like DDX21, FBL, IRF2, MAFG, NCOA3, POLR1E/PAF53 and FOXO1. Binds specifically to phosphorylated CREB and enhances its transcriptional activity toward cAMP-responsive genes. Acts as a coactivator of ALX1. Acts as a circadian transcriptional coactivator which enhances the activity of the circadian transcriptional activators: NPAS2-BMAL1 and CLOCK-BMAL1 heterodimers. Acetylates PCNA; acetylation promotes removal of chromatin-bound PCNA and its degradation during nucleotide excision repair (NER). Acetylates POLR1E/PAF53, leading to decreased association of RNA polymerase I with the rDNA promoter region and coding region. Acetylates DDX21, thereby inhibiting DDX21 helicase activity. Acetylates FBL, preventing methylation of 'Gln-105' of histone H2A (H2AQ104me). In addition to protein acetyltransferase, can use different acyl-CoA substrates, such as lactoyl-CoA, and is able to mediate protein lactylation. Catalyzes lactylation of MRE11 in response to DNA damage, thereby promoting DNA double-strand breaks (DSBs) via homologous recombination (HR). Functions as a transcriptional coactivator for SMAD4 in the TGF-beta signaling pathway. The sequence is that of CREB-binding protein from Homo sapiens (Human).